The primary structure comprises 110 residues: MKETKRFFNKNNRLNKGYAKTFSINEPDNNFYRKKFEHILPPVDLISEYESIYPGTLQELMHMAQKEQAHKHAIDLKNLKIQERIAKLTRICLLIFGIGLVVLIFLKLLK.

The helical transmembrane segment at 88–108 (LTRICLLIFGIGLVVLIFLKL) threads the bilayer.

The protein localises to the membrane. This is an uncharacterized protein from Rickettsia prowazekii (strain Madrid E).